We begin with the raw amino-acid sequence, 195 residues long: GTP-dependent dephospho-CoA kinase (195 aa).

The GTP site is built by D49, V50, D68, E127, and D150.

The protein belongs to the GTP-dependent DPCK family.

The catalysed reaction is 3'-dephospho-CoA + GTP = GDP + CoA + H(+). Its pathway is cofactor biosynthesis; coenzyme A biosynthesis. Functionally, catalyzes the GTP-dependent phosphorylation of the 3'-hydroxyl group of dephosphocoenzyme A to form coenzyme A (CoA). The chain is GTP-dependent dephospho-CoA kinase from Methanosarcina acetivorans (strain ATCC 35395 / DSM 2834 / JCM 12185 / C2A).